Here is a 308-residue protein sequence, read N- to C-terminus: ATP synthase gamma chain (308 aa).

This sequence belongs to the ATPase gamma chain family. As to quaternary structure, F-type ATPases have 2 components, CF(1) - the catalytic core - and CF(0) - the membrane proton channel. CF(1) has five subunits: alpha(3), beta(3), gamma(1), delta(1), epsilon(1). CF(0) has three main subunits: a, b and c.

It is found in the cell membrane. Functionally, produces ATP from ADP in the presence of a proton gradient across the membrane. The gamma chain is believed to be important in regulating ATPase activity and the flow of protons through the CF(0) complex. The protein is ATP synthase gamma chain of Mycobacteroides abscessus (strain ATCC 19977 / DSM 44196 / CCUG 20993 / CIP 104536 / JCM 13569 / NCTC 13031 / TMC 1543 / L948) (Mycobacterium abscessus).